A 163-amino-acid polypeptide reads, in one-letter code: MASFAQAAKSLLLKEFVGAFFLSMRQFFAPKATLNYPHEKGPVSPRFRGEHALRRYPNGEERCIACKLCEAICPAQAITIEAGPRRNDGTRRTVRYDIDMVKCIYCGFCQEACPVDAIVEGPNFEFATETREELYYDKDKLLANGDRWEREIARNIAMDAPYR.

4Fe-4S ferredoxin-type domains are found at residues 53-83 (LRRYPNGEERCIACKLCEAICPAQAITIEAG) and 94-123 (VRYDIDMVKCIYCGFCQEACPVDAIVEGPN). Residues C63, C66, C69, C73, C103, C106, C109, and C113 each contribute to the [4Fe-4S] cluster site.

It belongs to the complex I 23 kDa subunit family. In terms of assembly, NDH-1 is composed of 14 different subunits. Subunits NuoA, H, J, K, L, M, N constitute the membrane sector of the complex. Requires [4Fe-4S] cluster as cofactor.

It localises to the cell inner membrane. The catalysed reaction is a quinone + NADH + 5 H(+)(in) = a quinol + NAD(+) + 4 H(+)(out). In terms of biological role, NDH-1 shuttles electrons from NADH, via FMN and iron-sulfur (Fe-S) centers, to quinones in the respiratory chain. The immediate electron acceptor for the enzyme in this species is believed to be ubiquinone. Couples the redox reaction to proton translocation (for every two electrons transferred, four hydrogen ions are translocated across the cytoplasmic membrane), and thus conserves the redox energy in a proton gradient. The chain is NADH-quinone oxidoreductase subunit I from Brucella anthropi (strain ATCC 49188 / DSM 6882 / CCUG 24695 / JCM 21032 / LMG 3331 / NBRC 15819 / NCTC 12168 / Alc 37) (Ochrobactrum anthropi).